Consider the following 666-residue polypeptide: Neopullulanase 1 (666 aa).

The signal sequence occupies residues 1–29 (MIKLLKPMSLSILLVFILSFSFPFPTAKA). Ca(2+)-binding residues include A31, D33, N35, D71, D125, N174, D176, N179, D180, G216, and D218. Position 296 (H296) interacts with substrate. Ca(2+)-binding residues include D305, N309, F310, S312, and E317. R383 is a substrate binding site. Residue D385 is the Nucleophile of the active site. Residue E425 is the Proton donor of the active site. Substrate is bound by residues 500 to 501 (HD), D545, and R549.

Belongs to the glycosyl hydrolase 13 family. The cofactor is Ca(2+).

The protein resides in the secreted. The catalysed reaction is Hydrolysis of pullulan to panose (6-alpha-D-glucosylmaltose).. In terms of biological role, endohydrolysis of 1,4-alpha-glucosidic linkages in pullulan to form panose. Also hydrolyzes cyclodextrins. This is Neopullulanase 1 (tvaI) from Thermoactinomyces vulgaris.